Consider the following 713-residue polypeptide: Cyclomaltodextrin glucanotransferase (713 aa).

A signal peptide spans 1 to 27 (MKKISKLTTALALSLSLALSLLGPAHA). Residues 28–165 (APDTSVSNKQ…NIKVIIDFAP (138 aa)) form an A1 region. Ca(2+) is bound by residues D54, N56, N59, and N60. Cysteines 70 and 77 form a disulfide. G78 and D80 together coordinate Ca(2+). A substrate-binding site is contributed by 127-128 (YW). N166 lines the Ca(2+) pocket. The interval 166 to 229 (NHTSPASLDQ…NLYDLADLNH (64 aa)) is b. H167 contributes to the substrate binding site. I217 contacts Ca(2+). 220–223 (NLYD) lines the substrate pocket. Position 226 (D226) interacts with Ca(2+). Residues 230–433 (NNSTVDTYLK…LRKSNPAIAY (204 aa)) form an A2 region. Substrate is bound at residue R254. D256 functions as the Nucleophile in the catalytic mechanism. 259–260 (KH) contacts substrate. H260 provides a ligand contact to Ca(2+). The active-site Proton donor is the E284. H354, D398, and R402 together coordinate substrate. The c stretch occupies residues 434 to 522 (GTTQERWINN…GTAVWQYTTA (89 aa)). Residues 523-609 (VTAPTIGHVG…SNVHDNFEVL (87 aa)) are d. The 82-residue stretch at 526-607 (PTIGHVGPMM…TSSNVHDNFE (82 aa)) folds into the IPT/TIG domain. The region spanning 608-713 (VLSGDQVSVR…TATINVNWQP (106 aa)) is the CBM20 domain. The e stretch occupies residues 610–713 (SGDQVSVRFV…TATINVNWQP (104 aa)).

Belongs to the glycosyl hydrolase 13 family. In terms of assembly, monomer. Requires Ca(2+) as cofactor.

The protein resides in the secreted. It catalyses the reaction Cyclizes part of a (1-&gt;4)-alpha-D-glucan chain by formation of a (1-&gt;4)-alpha-D-glucosidic bond.. This Bacillus sp. (strain 17-1) protein is Cyclomaltodextrin glucanotransferase (cgt).